Consider the following 130-residue polypeptide: Small ribosomal subunit protein uS8 (130 aa).

It belongs to the universal ribosomal protein uS8 family. As to quaternary structure, part of the 30S ribosomal subunit. Contacts proteins S5 and S12.

In terms of biological role, one of the primary rRNA binding proteins, it binds directly to 16S rRNA central domain where it helps coordinate assembly of the platform of the 30S subunit. In Stutzerimonas stutzeri (strain A1501) (Pseudomonas stutzeri), this protein is Small ribosomal subunit protein uS8.